The sequence spans 102 residues: MKTIPLEAFLTVSMILFGLGLIGIIARRNLVTVLMSLELALNAVNIALVGADHYLGLAEGQIFALFIIALAATEAAVGLGIIIAIFRLKKVESTDEIRELRG.

Transmembrane regions (helical) follow at residues 6–26 (LEAF…GIIA), 30–50 (LVTV…ALVG), and 66–86 (FIIA…IAIF).

The protein belongs to the complex I subunit 4L family. As to quaternary structure, NDH-1 is composed of 14 different subunits. Subunits NuoA, H, J, K, L, M, N constitute the membrane sector of the complex.

The protein localises to the cell inner membrane. It carries out the reaction a quinone + NADH + 5 H(+)(in) = a quinol + NAD(+) + 4 H(+)(out). In terms of biological role, NDH-1 shuttles electrons from NADH, via FMN and iron-sulfur (Fe-S) centers, to quinones in the respiratory chain. The immediate electron acceptor for the enzyme in this species is believed to be ubiquinone. Couples the redox reaction to proton translocation (for every two electrons transferred, four hydrogen ions are translocated across the cytoplasmic membrane), and thus conserves the redox energy in a proton gradient. The polypeptide is NADH-quinone oxidoreductase subunit K 2 (Aquifex aeolicus (strain VF5)).